Consider the following 217-residue polypeptide: Thiamine-phosphate synthase (217 aa).

Residues 37 to 41 (QFREK) and asparagine 72 contribute to the 4-amino-2-methyl-5-(diphosphooxymethyl)pyrimidine site. Mg(2+)-binding residues include aspartate 73 and aspartate 92. Serine 110 lines the 4-amino-2-methyl-5-(diphosphooxymethyl)pyrimidine pocket. 136 to 138 (TVS) provides a ligand contact to 2-[(2R,5Z)-2-carboxy-4-methylthiazol-5(2H)-ylidene]ethyl phosphate. Position 139 (lysine 139) interacts with 4-amino-2-methyl-5-(diphosphooxymethyl)pyrimidine. 2-[(2R,5Z)-2-carboxy-4-methylthiazol-5(2H)-ylidene]ethyl phosphate contacts are provided by residues glycine 168 and 188-189 (IS).

The protein belongs to the thiamine-phosphate synthase family. It depends on Mg(2+) as a cofactor.

It catalyses the reaction 2-[(2R,5Z)-2-carboxy-4-methylthiazol-5(2H)-ylidene]ethyl phosphate + 4-amino-2-methyl-5-(diphosphooxymethyl)pyrimidine + 2 H(+) = thiamine phosphate + CO2 + diphosphate. The catalysed reaction is 2-(2-carboxy-4-methylthiazol-5-yl)ethyl phosphate + 4-amino-2-methyl-5-(diphosphooxymethyl)pyrimidine + 2 H(+) = thiamine phosphate + CO2 + diphosphate. The enzyme catalyses 4-methyl-5-(2-phosphooxyethyl)-thiazole + 4-amino-2-methyl-5-(diphosphooxymethyl)pyrimidine + H(+) = thiamine phosphate + diphosphate. It participates in cofactor biosynthesis; thiamine diphosphate biosynthesis; thiamine phosphate from 4-amino-2-methyl-5-diphosphomethylpyrimidine and 4-methyl-5-(2-phosphoethyl)-thiazole: step 1/1. Its function is as follows. Condenses 4-methyl-5-(beta-hydroxyethyl)thiazole monophosphate (THZ-P) and 2-methyl-4-amino-5-hydroxymethyl pyrimidine pyrophosphate (HMP-PP) to form thiamine monophosphate (TMP). The protein is Thiamine-phosphate synthase of Anoxybacillus flavithermus (strain DSM 21510 / WK1).